A 758-amino-acid chain; its full sequence is 5-methyltetrahydropteroyltriglutamate--homocysteine methyltransferase (758 aa).

5-methyltetrahydropteroyltri-L-glutamate contacts are provided by residues 17 to 20 (RELK) and Lys-117. L-homocysteine is bound by residues 434 to 436 (IGS) and Glu-487. Residues 434–436 (IGS) and Glu-487 contribute to the L-methionine site. Residues 518 to 519 (RC) and Trp-564 contribute to the 5-methyltetrahydropteroyltri-L-glutamate site. Asp-602 contacts L-homocysteine. Residue Asp-602 coordinates L-methionine. Glu-608 lines the 5-methyltetrahydropteroyltri-L-glutamate pocket. Residues His-644, Cys-646, and Glu-668 each coordinate Zn(2+). Catalysis depends on His-697, which acts as the Proton donor. Cys-729 is a Zn(2+) binding site.

Belongs to the vitamin-B12 independent methionine synthase family. Zn(2+) is required as a cofactor.

The enzyme catalyses 5-methyltetrahydropteroyltri-L-glutamate + L-homocysteine = tetrahydropteroyltri-L-glutamate + L-methionine. The protein operates within amino-acid biosynthesis; L-methionine biosynthesis via de novo pathway; L-methionine from L-homocysteine (MetE route): step 1/1. Catalyzes the transfer of a methyl group from 5-methyltetrahydrofolate to homocysteine resulting in methionine formation. In Yersinia pestis bv. Antiqua (strain Antiqua), this protein is 5-methyltetrahydropteroyltriglutamate--homocysteine methyltransferase.